Here is a 306-residue protein sequence, read N- to C-terminus: HTH-type transcriptional regulator AlkR (306 aa).

One can recognise an HTH araC/xylS-type domain in the interval 207–305 (SNALAAIHAY…EQSPKHYRQQ (99 aa)). DNA-binding regions (H-T-H motif) lie at residues 224–245 (ESLA…QSIV) and 272–295 (IQQI…KRQF).

Its pathway is hydrocarbon metabolism; alkane degradation. In terms of biological role, this protein activates the expression of the alkane 1-monooxygenase AlkM. The chain is HTH-type transcriptional regulator AlkR (alkR) from Acinetobacter baylyi (strain ATCC 33305 / BD413 / ADP1).